Here is a 198-residue protein sequence, read N- to C-terminus: UPF0301 protein BDI_1431 (198 aa).

The protein belongs to the UPF0301 (AlgH) family.

The chain is UPF0301 protein BDI_1431 from Parabacteroides distasonis (strain ATCC 8503 / DSM 20701 / CIP 104284 / JCM 5825 / NCTC 11152).